The sequence spans 258 residues: MAADLSAYPDRESELTHALAAMRSRLAAAAEAAGRNVGEIELLPITKFFPATDVAILFRLGCRSVGESREQEASAKMAELNRLLAAAELGHSGGVHWHMVGRIQRNKAGSLARWAHTAHSVDSSRLVTALDRAVVAALAEHRRGERLRVYVQVSLDGDGSRGGVDSTTPGAVDRICAQVQESEGLELVGLMGIPPLDWDPDEAFDRLQSEHNRVRAMFPHAIGLSAGMSNDLEVAVKHGSTCVRVGTALLGPRRLRSP.

Residue Lys47 is modified to N6-(pyridoxal phosphate)lysine.

It belongs to the pyridoxal phosphate-binding protein YggS/PROSC family.

Pyridoxal 5'-phosphate (PLP)-binding protein, which is involved in PLP homeostasis. This is Pyridoxal phosphate homeostasis protein from Mycobacterium bovis (strain ATCC BAA-935 / AF2122/97).